The primary structure comprises 139 residues: Small ribosomal subunit protein uS12m (139 aa).

The segment at 1–21 (MLSTLYQNDLKKKRNRRRNRS) is disordered. Residues 11–20 (KKKRNRRRNR) are compositionally biased toward basic residues.

Belongs to the universal ribosomal protein uS12 family.

It is found in the mitochondrion. Functionally, protein S12 is involved in the translation initiation step. In Paramecium tetraurelia, this protein is Small ribosomal subunit protein uS12m (RPS12).